The sequence spans 101 residues: Small ribosomal subunit protein uS14 (101 aa).

Residues 1-21 (MAKVSLIKKNESRKKKSQSLH) are disordered. Residues 11–21 (ESRKKKSQSLH) are compositionally biased toward basic residues.

This sequence belongs to the universal ribosomal protein uS14 family. As to quaternary structure, part of the 30S ribosomal subunit. Contacts proteins S3 and S10.

Its function is as follows. Binds 16S rRNA, required for the assembly of 30S particles and may also be responsible for determining the conformation of the 16S rRNA at the A site. The sequence is that of Small ribosomal subunit protein uS14 from Rickettsia canadensis (strain McKiel).